A 253-amino-acid chain; its full sequence is Dehydration-responsive element-binding protein 1D (253 aa).

The span at 1-22 shows a compositional bias: polar residues; it reads MEKNTAASGQLMTSSAEATPSS. The tract at residues 1–31 is disordered; the sequence is MEKNTAASGQLMTSSAEATPSSPKRPAGRTK. Residues 39–98 constitute a DNA-binding region (AP2/ERF); it reads VFRGVRWRGCAGRWVCKVRVPGSRGDRFWIGTSDTAEETARTHDAAMLALCGASASLNFA. Residues 131–153 are disordered; it reads RRVPAPGRGSTATATATSGDAAS. Low complexity predominate over residues 134 to 153; that stretch reads PAPGRGSTATATATSGDAAS.

It belongs to the AP2/ERF transcription factor family. ERF subfamily.

It localises to the nucleus. Transcriptional activator that binds specifically to the DNA sequence 5'-[AG]CCGAC-3'. Binding to the C-repeat/DRE element mediates high salinity- and dehydration-inducible transcription. This Oryza sativa subsp. indica (Rice) protein is Dehydration-responsive element-binding protein 1D (DREB1D).